We begin with the raw amino-acid sequence, 622 residues long: Chaperone protein HscA homolog (622 aa).

This sequence belongs to the heat shock protein 70 family.

Its function is as follows. Chaperone involved in the maturation of iron-sulfur cluster-containing proteins. Has a low intrinsic ATPase activity which is markedly stimulated by HscB. This is Chaperone protein HscA homolog from Azoarcus sp. (strain BH72).